The following is a 462-amino-acid chain: MGPWTHSLRAALLLVLLGVCTVSSDTPANCTYPDLLGTWVFQVGPRHPRSHINCSVMEPTEEKVVIHLKKLDTAYDEVGNSGYFTLIYNQGFEIVLNDYKWFAFFKYEVKGSRAISYCHETMTGWVHDVLGRNWACFVGKKMANHSEKVYVNVAHLGGLQEKYSERLYSHNHNFVKAINSVQKSWTATTYEEYEKLSIRDLIRRSGHSGRILRPKPAPITDEIQQQILSLPESWDWRNVRGINFVSPVRNQESCGSCYSFASLGMLEARIRILTNNSQTPILSPQEVVSCSPYAQGCDGGFPYLIAGKYAQDFGVVEENCFPYTATDAPCKPKENCLRYYSSEYYYVGGFYGGCNEALMKLELVKHGPMAVAFEVHDDFLHYHSGIYHHTGLSDPFNPFELTNHAVLLVGYGKDPVTGLDYWIVKNSWGSQWGESGYFRIRRGTDECAIESIAMAAIPIPKL.

A signal peptide spans 1–24; it reads MGPWTHSLRAALLLVLLGVCTVSS. N-linked (GlcNAc...) asparagine glycosylation is found at N29 and N53. Intrachain disulfides connect C30/C118 and C54/C136. Positions 135–229 are excised as a propeptide; the sequence is ACFVGKKMAN…TDEIQQQILS (95 aa). N-linked (GlcNAc...) asparagine glycosylation occurs at N144. 3 disulfides stabilise this stretch: C254/C297, C290/C330, and C320/C336. Residue C257 is part of the active site. N-linked (GlcNAc...) asparagine glycosylation is present at N275. Residues F301 and Y303 each contribute to the chloride site. Y346 serves as a coordination point for chloride. Active-site residues include H404 and N426.

Belongs to the peptidase C1 family. Tetramer of heterotrimers consisting of exclusion domain, heavy- and light chains. Chloride is required as a cofactor. In terms of tissue distribution, broadly distributed, but higher levels found in liver, spleen, intestine, lung and kidney.

The protein resides in the lysosome. The catalysed reaction is Release of an N-terminal dipeptide, Xaa-Yaa-|-Zaa-, except when Xaa is Arg or Lys, or Yaa or Zaa is Pro.. Functionally, thiol protease. Has dipeptidylpeptidase activity. Active against a broad range of dipeptide substrates composed of both polar and hydrophobic amino acids. Proline cannot occupy the P1 position and arginine cannot occupy the P2 position of the substrate. Can act as both an exopeptidase and endopeptidase. Activates serine proteases such as elastase, cathepsin G and granzymes A and B. The polypeptide is Dipeptidyl peptidase 1 (Ctsc) (Rattus norvegicus (Rat)).